The following is a 585-amino-acid chain: Probable multidrug resistance ABC transporter ATP-binding/permease protein YheI (585 aa).

An ABC transmembrane type-1 domain is found at 19-304; the sequence is YTIAIVLLLA…IGELINVMQR (286 aa). Helical transmembrane passes span 21-41, 57-77, 127-147, 149-169, 249-269, and 279-299; these read IAIV…KLLG, LLFY…MSYF, AVSL…MFMM, IFLT…IIPL, VKLL…FLVF, and VSFN…GELI. Positions 337–572 constitute an ABC transporter domain; the sequence is IVFSHVSFTY…NGWYREQYER (236 aa). An ATP-binding site is contributed by 371–378; sequence GKTGSGKT.

Belongs to the ABC transporter superfamily. In terms of assembly, heterodimer composed of YheH and YheI.

It localises to the cell membrane. With respect to regulation, inhibited by ortho-vanadate. Involved in the transport of four structurally unrelated drugs, including doxorubicin and mitoxantrone. Transmembrane domains (TMD) form a pore in the membrane and the ATP-binding domain (NBD) is responsible for energy generation. The chain is Probable multidrug resistance ABC transporter ATP-binding/permease protein YheI (yheI) from Bacillus subtilis (strain 168).